Here is a 172-residue protein sequence, read N- to C-terminus: NAD(P)H-quinone oxidoreductase subunit J (172 aa).

The protein belongs to the complex I 30 kDa subunit family. In terms of assembly, NDH-1 can be composed of about 15 different subunits; different subcomplexes with different compositions have been identified which probably have different functions.

Its subcellular location is the cellular thylakoid membrane. It carries out the reaction a plastoquinone + NADH + (n+1) H(+)(in) = a plastoquinol + NAD(+) + n H(+)(out). The enzyme catalyses a plastoquinone + NADPH + (n+1) H(+)(in) = a plastoquinol + NADP(+) + n H(+)(out). Its function is as follows. NDH-1 shuttles electrons from an unknown electron donor, via FMN and iron-sulfur (Fe-S) centers, to quinones in the respiratory and/or the photosynthetic chain. The immediate electron acceptor for the enzyme in this species is believed to be plastoquinone. Couples the redox reaction to proton translocation, and thus conserves the redox energy in a proton gradient. Cyanobacterial NDH-1 also plays a role in inorganic carbon-concentration. This Synechococcus elongatus (strain ATCC 33912 / PCC 7942 / FACHB-805) (Anacystis nidulans R2) protein is NAD(P)H-quinone oxidoreductase subunit J.